The sequence spans 329 residues: Putative glycosyltransferase CsbB (329 aa).

Helical transmembrane passes span 231 to 251 (CFYT…ATFV) and 264 to 284 (FTII…LGII).

It belongs to the glycosyltransferase 2 family. GtrB subfamily.

It localises to the cell membrane. In Bacillus subtilis (strain 168), this protein is Putative glycosyltransferase CsbB (csbB).